The following is a 294-amino-acid chain: Formate dehydrogenase, nitrate-inducible, iron-sulfur subunit (294 aa).

Topologically, residues 1-256 (MAMETQDIIK…DTSVSLWKGA (256 aa)) are periplasmic. 4 4Fe-4S ferredoxin-type domains span residues 30–58 (VAKL…IRDE), 91–123 (LEWL…QYAN), 124–153 (GIVD…LNKE), and 158–189 (YKCT…FGTK). 16 residues coordinate [4Fe-4S] cluster: Cys-39, Cys-42, Cys-45, Cys-49, Cys-100, Cys-103, Cys-108, Cys-112, Cys-133, Cys-136, Cys-139, Cys-143, Cys-160, Cys-163, Cys-175, and Cys-179. A helical membrane pass occupies residues 257–279 (LKPLAAAGFIATFAGLIFHYIGI). The Cytoplasmic portion of the chain corresponds to 280–294 (GPNKEVDDDEEDHHE).

Trimer of heterotrimers, consisting of subunits alpha, beta and gamma. Requires [4Fe-4S] cluster as cofactor.

It is found in the cell inner membrane. In terms of biological role, formate dehydrogenase allows E.coli to use formate as major electron donor during anaerobic respiration, when nitrate is used as electron acceptor. The beta subunit FdnH is an electron transfer unit containing 4 iron-sulfur clusters; it serves as a conduit for electrons that are transferred from the formate oxidation site in the alpha subunit (FdnG) to the menaquinone associated with the gamma subunit (FdnI) of formate dehydrogenase-N. Formate dehydrogenase-N is part of a system that generates proton motive force, together with the dissimilatory nitrate reductase (Nar). The sequence is that of Formate dehydrogenase, nitrate-inducible, iron-sulfur subunit (fdnH) from Escherichia coli (strain K12).